Here is a 315-residue protein sequence, read N- to C-terminus: Protein FRA10AC1 homolog (315 aa).

M1 carries the post-translational modification N-acetylmethionine. Residues 1-28 (MHGHGGYDSDFSDDEQGGGSSKKRKKTV) form a disordered region. A phosphoserine mark is found at S9 and S12. K36 carries the N6-acetyllysine modification. Positions 225-235 (KEIKSTKKRSK) are enriched in basic residues. The segment at 225 to 308 (KEIKSTKKRS…EKSQEEEFDD (84 aa)) is disordered. Residues 236–245 (TKTESDESPH) show a composition bias toward basic and acidic residues. S251 and S252 each carry phosphoserine. The span at 257-279 (SQGKDEGHSSSKRSEDSRNRNAG) shows a compositional bias: basic and acidic residues. Phosphoserine occurs at positions 283 and 285.

Interacts with ESS2.

Its subcellular location is the nucleus. May be involved in pre-mRNA splicing. This is Protein FRA10AC1 homolog (Fra10ac1) from Rattus norvegicus (Rat).